Consider the following 309-residue polypeptide: Methionyl-tRNA formyltransferase (309 aa).

107-110 lines the (6S)-5,6,7,8-tetrahydrofolate pocket; the sequence is SLLP.

It belongs to the Fmt family.

It carries out the reaction L-methionyl-tRNA(fMet) + (6R)-10-formyltetrahydrofolate = N-formyl-L-methionyl-tRNA(fMet) + (6S)-5,6,7,8-tetrahydrofolate + H(+). Attaches a formyl group to the free amino group of methionyl-tRNA(fMet). The formyl group appears to play a dual role in the initiator identity of N-formylmethionyl-tRNA by promoting its recognition by IF2 and preventing the misappropriation of this tRNA by the elongation apparatus. The chain is Methionyl-tRNA formyltransferase from Borrelia duttonii (strain Ly).